The chain runs to 177 residues: uncharacterized protein (177 aa).

Residues Leu10–Glu177 form the N-acetyltransferase domain.

This sequence belongs to the acetyltransferase family.

This is an uncharacterized protein from Bacillus subtilis (strain 168).